Consider the following 270-residue polypeptide: tRNA pseudouridine synthase A (270 aa).

The Nucleophile role is filled by D60. The segment at 107–111 (FHARF) is RNA binding. Y118 contributes to the substrate binding site. The segment at 168–172 (QCQSR) is interaction with tRNA.

The protein belongs to the tRNA pseudouridine synthase TruA family. In terms of assembly, homodimer.

It catalyses the reaction uridine(38/39/40) in tRNA = pseudouridine(38/39/40) in tRNA. In terms of biological role, formation of pseudouridine at positions 38, 39 and 40 in the anticodon stem and loop of transfer RNAs. In Escherichia fergusonii (strain ATCC 35469 / DSM 13698 / CCUG 18766 / IAM 14443 / JCM 21226 / LMG 7866 / NBRC 102419 / NCTC 12128 / CDC 0568-73), this protein is tRNA pseudouridine synthase A.